The following is a 365-amino-acid chain: Histidine biosynthesis bifunctional protein HisB (365 aa).

The histidinol-phosphatase stretch occupies residues 1–176 (MTQQPTLFID…VADPKGLGQP (176 aa)). The Nucleophile role is filled by Asp-10. Residues Asp-10 and Asp-12 each coordinate Mg(2+). Asp-12 acts as the Proton donor in catalysis. Residues Cys-93, His-95, Cys-101, and Cys-103 each contribute to the Zn(2+) site. Asp-130 serves as a coordination point for Mg(2+). Residues 177–365 (RHAVVARKTK…NEMPSSKGVL (189 aa)) form an imidazoleglycerol-phosphate dehydratase region.

This sequence in the N-terminal section; belongs to the histidinol-phosphatase family. The protein in the C-terminal section; belongs to the imidazoleglycerol-phosphate dehydratase family. The cofactor is Mg(2+). Zn(2+) is required as a cofactor.

The protein localises to the cytoplasm. The catalysed reaction is D-erythro-1-(imidazol-4-yl)glycerol 3-phosphate = 3-(imidazol-4-yl)-2-oxopropyl phosphate + H2O. It catalyses the reaction L-histidinol phosphate + H2O = L-histidinol + phosphate. The protein operates within amino-acid biosynthesis; L-histidine biosynthesis; L-histidine from 5-phospho-alpha-D-ribose 1-diphosphate: step 6/9. It participates in amino-acid biosynthesis; L-histidine biosynthesis; L-histidine from 5-phospho-alpha-D-ribose 1-diphosphate: step 8/9. The sequence is that of Histidine biosynthesis bifunctional protein HisB from Mannheimia succiniciproducens (strain KCTC 0769BP / MBEL55E).